A 501-amino-acid chain; its full sequence is MNTMSHKFVLALDEGTTSARAILFDSDLNIVNIGQYEFPQHYPQPGYVEHDPEEIWEAQMLAVKKAISKIDAKQIVAIGITNQRETTVLWDAKSGKPVYNAIVWQDRRTSPITDWLKANYFKMIKDKTGLVPDPYFSASKIKWILDNVSNVREKAERGEIKFGTIDTYLIWRLTNGKAHVTDYSNASRTMLFNINKLEWDREILELLKIPESILPEVKPSSEIYGYSEALGNLIPISGDAGDQQAALFGQVAFNVGEIKATYGTGSFILMNIGNNPIRSENLLTTIAWGLEKNKAKYALEGSIFITGAAVQWFRDGLRAIDVSDEIEPLASSVEDNGGVYFVPAFVGLGAPYWDPYARGLIIGITRGTTKAHIARAILESMAYQTRDVIEVMQKESSISINSLKVDGGAAKDNLLMQFQADIIGIKVIRPKVMETTSMGVAMLAGLGVGLWNSLEELRSIWKVDKEFIPSMSEEKRRALYSGWKEAVKRAMGWAKVVGGQV.

Residue T16 participates in ADP binding. ATP-binding residues include T16, T17, and S18. T16 provides a ligand contact to sn-glycerol 3-phosphate. R20 provides a ligand contact to ADP. The sn-glycerol 3-phosphate site is built by R84, E85, Y135, and D242. The glycerol site is built by R84, E85, Y135, D242, and Q243. ADP is bound by residues T264 and G307. Residues T264, G307, Q311, and G408 each coordinate ATP. G408 serves as a coordination point for ADP.

The protein belongs to the FGGY kinase family.

It catalyses the reaction glycerol + ATP = sn-glycerol 3-phosphate + ADP + H(+). It functions in the pathway polyol metabolism; glycerol degradation via glycerol kinase pathway; sn-glycerol 3-phosphate from glycerol: step 1/1. Its function is as follows. Key enzyme in the regulation of glycerol uptake and metabolism. Catalyzes the phosphorylation of glycerol to yield sn-glycerol 3-phosphate. The polypeptide is Glycerol kinase (Saccharolobus islandicus (strain M.16.27) (Sulfolobus islandicus)).